The primary structure comprises 263 residues: ABC transporter I family member 17 (263 aa).

Positions 29–260 constitute an ABC transporter domain; that stretch reads IRVHDLTRVA…THPMAQRFLQ (232 aa). 62 to 69 contacts ATP; that stretch reads GPSGSGKS.

It belongs to the ABC transporter superfamily. ABCI family.

In Arabidopsis thaliana (Mouse-ear cress), this protein is ABC transporter I family member 17 (ABCI17).